Here is a 188-residue protein sequence, read N- to C-terminus: Molybdopterin synthase catalytic subunit (188 aa).

Residues 1–14 (MTTQPPQDQTSTTP) show a composition bias toward low complexity. A disordered region spans residues 1 to 23 (MTTQPPQDQTSTTPSLPPHLDPT). Substrate-binding positions include 134–135 (HR), Lys-150, and 157–159 (KRE).

Belongs to the MoaE family. MOCS2B subfamily. In terms of assembly, heterotetramer; composed of 2 small (MOCS2A) and 2 large (MOCS2B) subunits.

The protein resides in the cytoplasm. It carries out the reaction 2 [molybdopterin-synthase sulfur-carrier protein]-C-terminal-Gly-aminoethanethioate + cyclic pyranopterin phosphate + H2O = molybdopterin + 2 [molybdopterin-synthase sulfur-carrier protein]-C-terminal Gly-Gly + 2 H(+). The protein operates within cofactor biosynthesis; molybdopterin biosynthesis. In terms of biological role, catalytic subunit of the molybdopterin synthase complex, a complex that catalyzes the conversion of precursor Z into molybdopterin. Acts by mediating the incorporation of 2 sulfur atoms from thiocarboxylated MOCS2A into precursor Z to generate a dithiolene group. The polypeptide is Molybdopterin synthase catalytic subunit (Neosartorya fischeri (strain ATCC 1020 / DSM 3700 / CBS 544.65 / FGSC A1164 / JCM 1740 / NRRL 181 / WB 181) (Aspergillus fischerianus)).